A 303-amino-acid polypeptide reads, in one-letter code: N-acetyl-D-glucosamine kinase (303 aa).

ATP-binding positions include 4 to 11 and 133 to 140; these read GFDIGGTK and GVGGGLVL. Residues histidine 157, cysteine 177, cysteine 179, and cysteine 184 each coordinate Zn(2+).

It belongs to the ROK (NagC/XylR) family. NagK subfamily.

It catalyses the reaction N-acetyl-D-glucosamine + ATP = N-acetyl-D-glucosamine 6-phosphate + ADP + H(+). It participates in cell wall biogenesis; peptidoglycan recycling. Its function is as follows. Catalyzes the phosphorylation of N-acetyl-D-glucosamine (GlcNAc) derived from cell-wall degradation, yielding GlcNAc-6-P. This chain is N-acetyl-D-glucosamine kinase, found in Salmonella paratyphi A (strain ATCC 9150 / SARB42).